A 64-amino-acid chain; its full sequence is Alpha-conotoxin-like Lp1.8 (64 aa).

A signal peptide spans 1 to 21; the sequence is MGMRMMFTMFLLVVLTTTVVS. The propeptide occupies 22–41; the sequence is FNSDRESNHENRRTSNQITR. 2 disulfide bridges follow: Cys47/Cys53 and Cys48/Cys61. The tract at residues 49–51 is lacks the Ser-Xaa-Pro motif that is crucial for potent interaction with nAChR; the sequence is KDP.

Belongs to the conotoxin A superfamily. In terms of tissue distribution, expressed by the venom duct.

It localises to the secreted. Alpha-conotoxins act on postsynaptic membranes, they bind to the nicotinic acetylcholine receptors (nAChR) and thus inhibit them. Has possibly a distinct nAChR binding mode from other alpha-conotoxins, due to a different three residue motif (Lys-Xaa-Pro instead of the conserved Ser-Xaa-Pro motif). In Conus leopardus (Leopard cone), this protein is Alpha-conotoxin-like Lp1.8.